The primary structure comprises 152 residues: Protein NrdI (152 aa).

It belongs to the NrdI family.

In terms of biological role, probably involved in ribonucleotide reductase function. This chain is Protein NrdI, found in Mycolicibacterium vanbaalenii (strain DSM 7251 / JCM 13017 / BCRC 16820 / KCTC 9966 / NRRL B-24157 / PYR-1) (Mycobacterium vanbaalenii).